Here is an 87-residue protein sequence, read N- to C-terminus: Kappa-3-bungarotoxin (87 aa).

The first 21 residues, 1-21 (MKTLLLSLVVVTIVCLDLGYT), serve as a signal peptide directing secretion. 5 disulfide bridges follow: cysteine 24/cysteine 42, cysteine 35/cysteine 63, cysteine 48/cysteine 52, cysteine 67/cysteine 79, and cysteine 80/cysteine 85.

This sequence belongs to the three-finger toxin family. Long-chain subfamily. Kappa-neurotoxin sub-subfamily. Homodimer and heterodimer with kappa 2-bungarotoxin; non-covalently-linked. As to expression, expressed by the venom gland.

It is found in the secreted. Functionally, postsynaptic neurotoxin that binds and inhibits neuronal nicotinic acetylcholine receptors (nAChR) with high affinity (IC(50)&lt;100 nM). Is a selective, and slowly reversible antagonist of alpha-3/CHRNA3-containing and some alpha-4/CHRNA4-containing AChRs. The polypeptide is Kappa-3-bungarotoxin (Bungarus multicinctus (Many-banded krait)).